Consider the following 3103-residue polypeptide: Extracellular matrix protein 3 (3103 aa).

A signal peptide spans 1–19 (MASALLCFLAAILPGMIAA). Residues 20 to 3047 (QNTWVLGTSD…TYELAPKGTN (3028 aa)) lie on the Extracellular side of the membrane. CSPG repeat units follow at residues 289-388 (PPSL…LEIV), 411-499 (APVV…FRMT), 520-630 (APIV…FRVV), 656-762 (PPEM…FVVQ), 784-875 (QPPT…LEIT), 901-993 (LPPG…LTLS), 1022-1124 (APNV…FRCT), 1145-1238 (EEPQ…VLLT), 1259-1357 (TPRL…FDIT), 1378-1470 (VHPS…FQVT), 1490-1579 (KEPV…FIVT), and 1613-1710 (APQI…VEVR). Asn330 and Asn453 each carry an N-linked (GlcNAc...) asparagine glycan. Asn989, Asn1024, Asn1042, Asn1207, Asn1294, Asn1321, and Asn1327 each carry an N-linked (GlcNAc...) asparagine glycan. Asn1542, Asn1674, Asn1679, Asn1725, and Asn1739 each carry an N-linked (GlcNAc...) asparagine glycan. 4 Calx-beta domains span residues 1717–1816 (LPNQ…IILH), 1829–1942 (AVVT…VKLS), 1956–2062 (NVII…LVLN), and 2077–2179 (ITIN…LVLG). N-linked (GlcNAc...) asparagine glycosylation is found at Asn2080, Asn2195, Asn2274, Asn2385, and Asn2932. Positions 2197–2302 (TVVTVHDVGD…MREAFTLHIT (106 aa)) constitute a Calx-beta 5 domain. A disordered region spans residues 2983–3013 (SSGIGKRETEHHAISSRQRRQANSEALVDPA). The chain crosses the membrane as a helical span at residues 3048-3068 (VVMIAVVIGVILIILLVALVI). Residues 3069–3103 (GVVVRRRQAKQQPVVVVNGSAKVVSNVHFDDNTEV) are Cytoplasmic-facing.

Belongs to the FRAS1 family. Component of extracellular matrix fibers that interact with PMC filopodia during gastrulation (at protein level).

It localises to the cell membrane. Its function is as follows. Extracellular matrix protein that may serve as substrate for the migratory primary mesenchyme cells (PMCs), the interaction possibly providing guidance information to migrating PMCs. This chain is Extracellular matrix protein 3 (ECM3), found in Lytechinus variegatus (Green sea urchin).